An 811-amino-acid polypeptide reads, in one-letter code: Lysine-specific histone demethylase 1 homolog 3 (811 aa).

Positions 1–10 are enriched in pro residues; sequence MSDQPPPYTP. The segment at 1–79 is disordered; it reads MSDQPPPYTP…PSAQPPPRAS (79 aa). A compositionally biased stretch (basic residues) spans 44–55; that stretch reads NKRKRTGFRRKL. The span at 56-71 shows a compositional bias: low complexity; that stretch reads PSGSPAAPVAVAASPS. Residues 88 to 189 enclose the SWIRM domain; the sequence is NREPTAEAVT…FGVAPAIKER (102 aa). 4 residues coordinate FAD: Glu227, Arg229, Arg235, and Glu609. Residues 790–811 form a disordered region; that stretch reads RNSSRTKTRPSKLKIGIPKSKS.

Belongs to the flavin monoamine oxidase family. FAD serves as cofactor.

Its function is as follows. Probable histone demethylase. The protein is Lysine-specific histone demethylase 1 homolog 3 of Oryza sativa subsp. japonica (Rice).